An 801-amino-acid chain; its full sequence is Protein 4.1 (801 aa).

Residues 1–187 (MTTEKGLLAE…GESKASHKVV (187 aa)) form a disordered region. Over residues 45–58 (EQSQESPSTTSPST) the composition is skewed to low complexity. The span at 88-107 (SDEKEVELLGEKGQDQKDVD) shows a compositional bias: basic and acidic residues. Positions 108 to 117 (EGLGEQLEDD) are enriched in acidic residues. Over residues 141-151 (SLSSAETQPAQ) the composition is skewed to polar residues. The span at 154–166 (QKEDQDPEADCED) shows a compositional bias: acidic residues. Over residues 167-182 (VEGKEPIKKPEGESKA) the composition is skewed to basic and acidic residues. An FERM domain is found at 193 to 474 (MRCKVTLLDD…EHHTFFRLTS (282 aa)). The tract at residues 477 to 587 (SIPKHRFLSL…GMPNQRESPK (111 aa)) is hydrophilic. The disordered stretch occupies residues 516 to 613 (RTGSKRASRS…DKVKDLEKTQ (98 aa)). Basic and acidic residues predominate over residues 563 to 577 (RVEEMPKKTEEKPKE). Residues 588–651 (DVKATQQDSP…WDKRLSTHSP (64 aa)) form a spectrin--actin-binding region. The span at 591–601 (ATQQDSPSPTV) shows a compositional bias: polar residues. The span at 604–613 (DKVKDLEKTQ) shows a compositional bias: basic and acidic residues. A C-terminal (CTD) region spans residues 653 to 801 (RTLSFNGQVQ…GVVHQETEIA (149 aa)).

Binds with a high affinity to glycophorin and with lower affinity to band III protein. Associates with the nuclear mitotic apparatus. Binds calmodulin. Phosphorylated at multiple sites by different protein kinases and each phosphorylation event selectively modulates the protein's functions. As to expression, found exclusively in photoreceptors following the terminal mitosis of retinal neurons. When retinal synaptogenesis is complete, protein 4.1 is also expressed in the inner retina. In adult amphibian retinas, protein 4.1 is detected in photoreceptors, bipolar cells, and ganglion cell axons.

Its subcellular location is the nucleus. The protein resides in the cytoplasm. It is found in the cytoskeleton. It localises to the cell cortex. Its function is as follows. Protein 4.1 is a major structural element of the erythrocyte membrane skeleton. It plays a key role in regulating membrane physical properties of mechanical stability and deformability by stabilizing spectrin-actin interaction. May be required for dynein-dynactin complex and NUMA1 recruitment at the mitotic cell cortex during anaphase. This Xenopus laevis (African clawed frog) protein is Protein 4.1.